We begin with the raw amino-acid sequence, 187 residues long: UPF0301 protein Cpar_0662 (187 aa).

This sequence belongs to the UPF0301 (AlgH) family.

The protein is UPF0301 protein Cpar_0662 of Chlorobaculum parvum (strain DSM 263 / NCIMB 8327) (Chlorobium vibrioforme subsp. thiosulfatophilum).